We begin with the raw amino-acid sequence, 268 residues long: Tryptophan synthase alpha chain (268 aa).

Active-site proton acceptor residues include Glu-49 and Asp-60.

Belongs to the TrpA family. In terms of assembly, tetramer of two alpha and two beta chains.

It carries out the reaction (1S,2R)-1-C-(indol-3-yl)glycerol 3-phosphate + L-serine = D-glyceraldehyde 3-phosphate + L-tryptophan + H2O. The protein operates within amino-acid biosynthesis; L-tryptophan biosynthesis; L-tryptophan from chorismate: step 5/5. The alpha subunit is responsible for the aldol cleavage of indoleglycerol phosphate to indole and glyceraldehyde 3-phosphate. The protein is Tryptophan synthase alpha chain of Pseudomonas aeruginosa (strain UCBPP-PA14).